The sequence spans 856 residues: Valine--tRNA ligase (856 aa).

Positions 47–57 (PTASGVLHIGH) match the 'HIGH' region motif. The 'KMSKS' region motif lies at 578–582 (KMSKS). An ATP-binding site is contributed by lysine 581.

This sequence belongs to the class-I aminoacyl-tRNA synthetase family. ValS type 2 subfamily. In terms of assembly, monomer.

It localises to the cytoplasm. It catalyses the reaction tRNA(Val) + L-valine + ATP = L-valyl-tRNA(Val) + AMP + diphosphate. Its function is as follows. Catalyzes the attachment of valine to tRNA(Val). As ValRS can inadvertently accommodate and process structurally similar amino acids such as threonine, to avoid such errors, it has a 'posttransfer' editing activity that hydrolyzes mischarged Thr-tRNA(Val) in a tRNA-dependent manner. The sequence is that of Valine--tRNA ligase from Tropheryma whipplei (strain Twist) (Whipple's bacillus).